The chain runs to 345 residues: 3-isopropylmalate dehydrogenase (345 aa).

76-87 (GPKYDNAPVRPE) is an NAD(+) binding site. Positions 94, 104, 132, and 216 each coordinate substrate. Mg(2+) contacts are provided by D216, D240, and D244. 274–286 (GSAPDIAGQGIAN) contacts NAD(+).

This sequence belongs to the isocitrate and isopropylmalate dehydrogenases family. LeuB type 1 subfamily. As to quaternary structure, homodimer. The cofactor is Mg(2+). It depends on Mn(2+) as a cofactor.

It is found in the cytoplasm. The catalysed reaction is (2R,3S)-3-isopropylmalate + NAD(+) = 4-methyl-2-oxopentanoate + CO2 + NADH. It participates in amino-acid biosynthesis; L-leucine biosynthesis; L-leucine from 3-methyl-2-oxobutanoate: step 3/4. Its function is as follows. Catalyzes the oxidation of 3-carboxy-2-hydroxy-4-methylpentanoate (3-isopropylmalate) to 3-carboxy-4-methyl-2-oxopentanoate. The product decarboxylates to 4-methyl-2 oxopentanoate. This Streptococcus thermophilus (strain CNRZ 1066) protein is 3-isopropylmalate dehydrogenase.